The sequence spans 214 residues: MSIFNKDALSSFFGLSGEEDDYYDNYEEYEERKAVNEPPRRAARPKPQRPVQQQESYSQPAYTQQSEPVVEKPSARYRSAEAHQERDTQQAAYTEKKVVSMRSSNQSATTNTRRAQESTANAKTHKITIIEPRVYSEAMSIAKHLFAEEAVLVNFTLVEEDQARRIVDFLTGTVYALDGDIQRVGNEIFLCTPANMEIDSATAQSLANKQFFDF.

Residues 24–120 form a disordered region; it reads DNYEEYEERK…NTRRAQESTA (97 aa). The segment covering 30–40 has biased composition (basic and acidic residues); it reads EERKAVNEPPR. The segment covering 55 to 67 has biased composition (polar residues); it reads ESYSQPAYTQQSE. The segment covering 69–98 has biased composition (basic and acidic residues); that stretch reads VVEKPSARYRSAEAHQERDTQQAAYTEKKV. Polar residues predominate over residues 101–120; that stretch reads MRSSNQSATTNTRRAQESTA.

This sequence belongs to the SepF family. As to quaternary structure, homodimer. Interacts with FtsZ.

The protein localises to the cytoplasm. Cell division protein that is part of the divisome complex and is recruited early to the Z-ring. Probably stimulates Z-ring formation, perhaps through the cross-linking of FtsZ protofilaments. Its function overlaps with FtsA. In Enterococcus faecalis (strain ATCC 700802 / V583), this protein is Cell division protein SepF.